The sequence spans 253 residues: MICOS complex subunit mic25 (253 aa).

The tract at residues 1-89 (MGGSESTGRK…GAHKPTAAGV (89 aa)) is disordered. A lipid anchor (N-myristoyl glycine) is attached at Gly-2. Over residues 28–44 (RLSDEVVNRMKDSDLPS) the composition is skewed to basic and acidic residues. Positions 48-64 (STSAASGTASAPAAFPS) are enriched in low complexity. Positions 94-178 (AEEDLYRRYE…EQLSSIEKKN (85 aa)) form a coiled coil. Residues 206-248 (DPVCMNLQADILKCYSENKQERLNCSNLAKEYRKCVSAAQKNL) form the CHCH domain. Short sequence motifs (cx9C motif) lie at residues 209–219 (CMNLQADILKC) and 230–240 (CSNLAKEYRKC). 2 cysteine pairs are disulfide-bonded: Cys-209–Cys-240 and Cys-219–Cys-230.

The protein belongs to the MICOS complex subunit Mic19 family. Metazoan Mic25 subfamily. As to quaternary structure, component of the mitochondrial contact site and cristae organizing system (MICOS) complex (also known as MINOS or MitOS complex).

It is found in the mitochondrion inner membrane. Component of the MICOS complex, a large protein complex of the mitochondrial inner membrane that plays crucial roles in the maintenance of crista junctions, inner membrane architecture, and formation of contact sites to the outer membrane. The protein is MICOS complex subunit mic25 (chchd6) of Xenopus tropicalis (Western clawed frog).